The chain runs to 1197 residues: Disease resistance-like protein CSA1 (1197 aa).

The TIR domain occupies 15 to 178 (PQDQVFINFR…IIIRKVKEIL (164 aa)). E89 is an active-site residue. An NB-ARC domain is found at 210-480 (RIKQLEEKLR…ACFRSQDENY (271 aa)). LRR repeat units follow at residues 614-636 (LNEVRYLHWLKFPLKEVPQDFNP), 638-659 (NLVDLKLPYSEIERVWEDNKDA), 694-716 (TALKEMHVDMENMKFLVFLNLRG), 728-749 (LISLKTLILSGCSKFKTFQVIS), 750-774 (DKLEALYLDGTAIKELPCDIGRLQR), 776-796 (VMLNMKGCKKLKRLPDSLGQL), 797-819 (KALEELILSGCSKLNEFPETWGN), 820-843 (MSRLEILLLDETAIKDMPKILSVR), 845-862 (LCLNKNEKISRLPDLLNK), and 863-889 (FSQLQWLHLKYCKNLTHVPQLPPNLQY).

The catalysed reaction is NAD(+) + H2O = ADP-D-ribose + nicotinamide + H(+). TIR-NB-LRR receptor-like protein that functions in photomorphogenic development. May function downstream of phytochrome B (phyB) signaling. The polypeptide is Disease resistance-like protein CSA1 (Arabidopsis thaliana (Mouse-ear cress)).